The sequence spans 308 residues: Acetylglutamate kinase (308 aa).

Residues 86-87 (GG), Arg108, and Asn201 each bind substrate.

It belongs to the acetylglutamate kinase family. ArgB subfamily.

It is found in the cytoplasm. The catalysed reaction is N-acetyl-L-glutamate + ATP = N-acetyl-L-glutamyl 5-phosphate + ADP. It functions in the pathway amino-acid biosynthesis; L-arginine biosynthesis; N(2)-acetyl-L-ornithine from L-glutamate: step 2/4. Catalyzes the ATP-dependent phosphorylation of N-acetyl-L-glutamate. The polypeptide is Acetylglutamate kinase (Prochlorococcus marinus (strain MIT 9303)).